The chain runs to 677 residues: mRNA export factor Gle1 (677 aa).

Residues 34–48 are compositionally biased toward basic and acidic residues; sequence EDREPIWVEGSRKTP. Disordered regions lie at residues 34–65, 113–136, and 294–366; these read EDRE…NNEI, KQDA…DQLQ, and ERQR…ATST. The span at 49-60 shows a compositional bias: pro residues; sequence EPPLPEESPAPE. Coiled coils occupy residues 122 to 179 and 280 to 346; these read ETQQ…QKLH and QQQL…AANV. The span at 294-340 shows a compositional bias: basic and acidic residues; that stretch reads ERQRQQQQEEERQKLEEQQKLEEQEKLRKEKEESAAKEKQQEAETAK.

This sequence belongs to the GLE1 family. As to quaternary structure, may associate with the NPC.

Its subcellular location is the cytoplasm. It is found in the nucleus. The protein localises to the nuclear pore complex. In terms of biological role, required for the export of mRNAs containing poly(A) tails from the nucleus into the cytoplasm. May be involved in the terminal step of the mRNA transport through the nuclear pore complex (NPC). This is mRNA export factor Gle1 from Drosophila melanogaster (Fruit fly).